Consider the following 310-residue polypeptide: Homoserine O-acetyltransferase (310 aa).

C142 acts as the Acyl-thioester intermediate in catalysis. K163 and S192 together coordinate substrate. The active-site Proton acceptor is the H235. E237 is a catalytic residue. Residue R249 coordinates substrate.

Belongs to the MetA family.

The protein localises to the cytoplasm. It catalyses the reaction L-homoserine + acetyl-CoA = O-acetyl-L-homoserine + CoA. It functions in the pathway amino-acid biosynthesis; L-methionine biosynthesis via de novo pathway; O-acetyl-L-homoserine from L-homoserine: step 1/1. Its function is as follows. Transfers an acetyl group from acetyl-CoA to L-homoserine, forming acetyl-L-homoserine. The polypeptide is Homoserine O-acetyltransferase (Parabacteroides distasonis (strain ATCC 8503 / DSM 20701 / CIP 104284 / JCM 5825 / NCTC 11152)).